Reading from the N-terminus, the 188-residue chain is Elongation factor P (188 aa).

N6-(3,6-diaminohexanoyl)-5-hydroxylysine is present on Lys34.

It belongs to the elongation factor P family. Post-translationally, is beta-lysylated on the epsilon-amino group of Lys-34 by the combined action of EpmA and EpmB, and then hydroxylated on the C5 position of the same residue by EpmC. Lysylation is critical for the stimulatory effect of EF-P on peptide-bond formation. The lysylation moiety would extend toward the peptidyltransferase center and stabilize the terminal 3-CCA end of the tRNA. The hydroxylation of the C5 position on Lys-34 would allow additional potential stabilizing hydrogen-bond interactions with the P-tRNA.

The protein resides in the cytoplasm. Its pathway is protein biosynthesis; polypeptide chain elongation. Functionally, involved in peptide bond synthesis. Alleviates ribosome stalling that occurs when 3 or more consecutive Pro residues or the sequence PPG is present in a protein, possibly by augmenting the peptidyl transferase activity of the ribosome. Modification of Lys-34 is required for alleviation. This Salmonella arizonae (strain ATCC BAA-731 / CDC346-86 / RSK2980) protein is Elongation factor P.